A 226-amino-acid chain; its full sequence is UPF0173 metal-dependent hydrolase CTN_1413 (226 aa).

The protein belongs to the UPF0173 family.

This is UPF0173 metal-dependent hydrolase CTN_1413 from Thermotoga neapolitana (strain ATCC 49049 / DSM 4359 / NBRC 107923 / NS-E).